Reading from the N-terminus, the 247-residue chain is tRNA pseudouridine synthase A (247 aa).

Residue aspartate 53 is the Nucleophile of the active site. A substrate-binding site is contributed by tyrosine 111.

The protein belongs to the tRNA pseudouridine synthase TruA family. Homodimer.

The catalysed reaction is uridine(38/39/40) in tRNA = pseudouridine(38/39/40) in tRNA. Functionally, formation of pseudouridine at positions 38, 39 and 40 in the anticodon stem and loop of transfer RNAs. This is tRNA pseudouridine synthase A from Bacillus subtilis (strain 168).